The primary structure comprises 266 residues: MSSIDTPANKLQAKTLFHPEHLEYINKQLSELSPQDILKWCRWTLPSLFQTSALGLSGLVIMDMLSKMDMNVPLIFINTLHHFPETLDLLEKVKTKYPNVPVHVYRCAEAANEKEFAQKFGEKLWETDESRYDFLVKVEPASRAYSDLNVLAVFTGRRRSQGGERGSLPIVQLDGPVLKINPLANWSFTEVHNYIITNNVPYNELLNKGYRSVGDWHSTQPVREGEDERAGRWRGREKTECGLHSHPQSKFAQYMAELKKKETADQ.

The tract at residues 219-246 (TQPVREGEDERAGRWRGREKTECGLHSH) is disordered. Positions 223–243 (REGEDERAGRWRGREKTECGL) are enriched in basic and acidic residues.

It belongs to the PAPS reductase family. CysH subfamily.

It localises to the cytoplasm. The protein localises to the nucleus. It carries out the reaction [thioredoxin]-disulfide + sulfite + adenosine 3',5'-bisphosphate + 2 H(+) = [thioredoxin]-dithiol + 3'-phosphoadenylyl sulfate. It participates in sulfur metabolism; hydrogen sulfide biosynthesis; sulfite from sulfate: step 3/3. Its function is as follows. The NADP dependent reduction of PAPS into sulfite involves thioredoxin which probably plays the role of a thiol carrier. Required for methionine synthesis. The chain is Probable phosphoadenosine phosphosulfate reductase (met16) from Schizosaccharomyces pombe (strain 972 / ATCC 24843) (Fission yeast).